Here is a 408-residue protein sequence, read N- to C-terminus: Echinulin prenyltransferase 2 (408 aa).

Residues R94, K181, Y183, R248, K250, Y252, Q334, Y336, Y400, and Y404 each contribute to the dimethylallyl diphosphate site.

It belongs to the tryptophan dimethylallyltransferase family.

It catalyses the reaction preechinulin + dimethylallyl diphosphate = tardioxopiperazine B + diphosphate. It carries out the reaction preechinulin + dimethylallyl diphosphate = tardioxopiperazine A + diphosphate. The catalysed reaction is tardioxopiperazine A + dimethylallyl diphosphate = echinulin + diphosphate. The enzyme catalyses tardioxopiperazine A + dimethylallyl diphosphate = variecolorin L + diphosphate. It catalyses the reaction neoechinulin A + dimethylallyl diphosphate = variecolorin G + diphosphate. It carries out the reaction neoechinulin A + dimethylallyl diphosphate = isoechinulin A + diphosphate. The catalysed reaction is isoechinulin A + dimethylallyl diphosphate = dehydroechinulin + diphosphate. The enzyme catalyses neoechinulin B + dimethylallyl diphosphate = isoechinulin B + diphosphate. Its pathway is secondary metabolite biosynthesis. It participates in alkaloid biosynthesis. Functionally, prenyltransferase; part of the gene cluster that mediates the biosynthesis of echinulin family alkaloid. The pathway begins with the biosynthesis of the cyclic dipeptide cyclo-L-Trp-L-Ala (cyclo-TA) by the NRPS echPS via condensation of L-alanine and L-tryptophan. The prenyltransferase echPT1 then catalyzes the first prenylation step, a reverse prenylation reaction at C2, to yield preechinulin. Preechinulin is the substrate of the cytochrome P450 monooxygenase echP450 that catalyzes the formation of the double bond between C10 and C11 to produce neoechulin A. The unique prenyltransferase echPT2 functions as a competitive enzyme with echP450 for preechinulin metabolization and uses preechinulin for effective regiospecific prenylations. Preechinulin is prenylated by echPT2 at C5 or C7. C7-prenylation leads to accumulation of tardioxopiperazine B without further modification by echPT2. In contrast, the C5-prenylated tardioxopiperazine A can be prenylated again by echPT2, predominantly at C7 to form echinulin or less frequently at C4 to give variecolorin L. EchPT2 also accepts neoechilunin A to produce varlecolorin G (prenylation at C5) or isoechinulin A (prenylation at C7). EchPT2 further converts isoechinulin A into dehydroechinulin. Moreover, a yet unidentified enzyme can also convert neoechilunin A into neoechilunin B by introducing a double bond between positions C14 and C17 and thus provides a further substrate to echPT2 for C5 and C7 prenylation. This is Echinulin prenyltransferase 2 from Aspergillus ruber (Eurotium rubrum).